The following is a 165-amino-acid chain: Adenosine 5'-monophosphoramidase HINT3 (165 aa).

The segment at 1–23 is disordered; sequence MAEKQAGLVGEPDPEGSSPGTSE. N-acetylalanine is present on A2. Positions 32–143 constitute an HIT domain; sequence VFCRVAAGQE…PVKEFGFLSK (112 aa). AMP contacts are provided by residues 59–60 and 128–130; these read DI and HLH. Residues 126–130 carry the Histidine triad motif motif; that stretch reads HLHLH. The Tele-AMP-histidine intermediate role is filled by H128.

The protein belongs to the HINT family. Forms dimers to octamers and even larger oligomer. Interacts with CALM1.

It localises to the cytoplasm. The protein localises to the nucleus. The catalysed reaction is adenosine 5'-phosphoramidate + H2O = AMP + NH4(+). In terms of biological role, exhibits adenosine 5'-monophosphoramidase activity, hydrolyzing purine nucleotide phosphoramidates with a single phosphate group such as adenosine 5'monophosphoramidate (AMP-NH2) to yield AMP and NH2. Hydrolyzes lysyl-AMP (AMP-N-epsilon-(N-alpha-acetyl lysine methyl ester)) generated by lysine tRNA ligase. In Mus musculus (Mouse), this protein is Adenosine 5'-monophosphoramidase HINT3 (Hint3).